A 166-amino-acid chain; its full sequence is Lipoprotein signal peptidase (166 aa).

The next 3 membrane-spanning stretches (helical) occupy residues 10 to 30, 68 to 88, and 94 to 114; these read LIWLLLSALVIGLDQWSKAWV, WQLWFFTALAMGISGLLAFWL, and GHWRSALPYALVIGGAIGNVI. Residues aspartate 124 and aspartate 142 contribute to the active site. Residues 138–158 form a helical membrane-spanning segment; the sequence is FNIADSAIVGGAIGIAVFGLF.

This sequence belongs to the peptidase A8 family.

The protein resides in the cell inner membrane. It carries out the reaction Release of signal peptides from bacterial membrane prolipoproteins. Hydrolyzes -Xaa-Yaa-Zaa-|-(S,diacylglyceryl)Cys-, in which Xaa is hydrophobic (preferably Leu), and Yaa (Ala or Ser) and Zaa (Gly or Ala) have small, neutral side chains.. Its pathway is protein modification; lipoprotein biosynthesis (signal peptide cleavage). This protein specifically catalyzes the removal of signal peptides from prolipoproteins. The chain is Lipoprotein signal peptidase from Xanthomonas oryzae pv. oryzae (strain MAFF 311018).